The following is a 1440-amino-acid chain: ABC transporter G family member 46 (1440 aa).

The segment at methionine 1–aspartate 42 is disordered. Residues serine 21 to serine 32 are compositionally biased toward low complexity. The 283-residue stretch at alanine 137–glutamate 419 folds into the ABC transporter 1 domain. Residue glycine 170 to threonine 177 participates in ATP binding. Residues lysine 497–phenylalanine 710 form the ABC transmembrane type-2 1 domain. 7 consecutive transmembrane segments (helical) span residues leucine 516–isoleucine 536, alanine 561–phenylalanine 581, threonine 603–phenylalanine 623, phenylalanine 634–leucine 654, valine 659–isoleucine 679, tryptophan 688–asparagine 708, and isoleucine 745–leucine 765. Positions aspartate 794–proline 829 are disordered. Polar residues predominate over residues glycine 812 to proline 829. One can recognise an ABC transporter 2 domain in the interval methionine 843–glutamate 1095. Glycine 888–threonine 895 serves as a coordination point for ATP. Residues isoleucine 1168–phenylalanine 1382 enclose the ABC transmembrane type-2 2 domain. 7 helical membrane passes run isoleucine 1188 to glycine 1208, leucine 1219 to glutamine 1236, valine 1271 to serine 1291, phenylalanine 1302 to methionine 1322, methionine 1332 to isoleucine 1352, isoleucine 1357 to leucine 1377, and leucine 1410 to phenylalanine 1430.

The protein belongs to the ABC transporter superfamily. ABCG family. PDR (TC 3.A.1.205) subfamily.

It is found in the membrane. May be a general defense protein. This is ABC transporter G family member 46 from Oryza sativa subsp. japonica (Rice).